The following is an 87-amino-acid chain: U9-ctenitoxin-Pn1a (87 aa).

A signal peptide spans 1-22 (MWLKTQLFVLAIAVIALLEVHA). A propeptide spanning residues 23–37 (EPESNDNNELVVEEA) is cleaved from the precursor. 4 disulfides stabilise this stretch: cysteine 40/cysteine 54, cysteine 47/cysteine 64, cysteine 53/cysteine 73, and cysteine 66/cysteine 71. A propeptide spanning residues 75–87 (KSLREMAAAAFGR) is cleaved from the precursor.

This sequence belongs to the neurotoxin 02 (plectoxin) family. 01 (Tx3) subfamily. Expressed by the venom gland.

The protein localises to the secreted. Functionally, antagonist of L-type calcium channels (Cav1/CACNA1). This is U9-ctenitoxin-Pn1a from Phoneutria nigriventer (Brazilian armed spider).